Reading from the N-terminus, the 241-residue chain is Orotidine 5'-phosphate decarboxylase (241 aa).

Residues aspartate 15, lysine 37, 64 to 73, threonine 126, arginine 187, glutamine 196, glycine 216, and arginine 217 contribute to the substrate site; that span reads DLKYHDIPNT. Lysine 66 serves as the catalytic Proton donor.

The protein belongs to the OMP decarboxylase family. Type 1 subfamily. Homodimer.

It carries out the reaction orotidine 5'-phosphate + H(+) = UMP + CO2. The protein operates within pyrimidine metabolism; UMP biosynthesis via de novo pathway; UMP from orotate: step 2/2. Its function is as follows. Catalyzes the decarboxylation of orotidine 5'-monophosphate (OMP) to uridine 5'-monophosphate (UMP). The protein is Orotidine 5'-phosphate decarboxylase of Geotalea uraniireducens (strain Rf4) (Geobacter uraniireducens).